The following is a 344-amino-acid chain: uncharacterized protein (344 aa).

The NADP(+) site is built by Lys-38 and Tyr-167.

Belongs to the NAD(P)-dependent epimerase/dehydratase family. Dihydroflavonol-4-reductase subfamily.

This is an uncharacterized protein from Saccharomyces cerevisiae (strain ATCC 204508 / S288c) (Baker's yeast).